The primary structure comprises 2717 residues: Naringenin synthase (2717 aa).

Positions 13-422 are adenylation (A) domain; it reads HHAVESRDKV…VGRKKELIIR (410 aa). The 87-residue stretch at 531–617 folds into the Carrier 1 domain; it reads AAVEALVLAE…AVRDYLFNRL (87 aa). Ser-576 carries the post-translational modification O-(pantetheine 4'-phosphoryl)serine. One can recognise a Ketosynthase family 3 (KS3) domain in the interval 638 to 1066; that stretch reads AEPIAIISMA…GTNAHIILEQ (429 aa). Residues Cys-810, His-945, and His-988 each act as for beta-ketoacyl synthase activity in the active site. In terms of domain architecture, Malonyl-CoA:ACP transacylase (MAT) spans 1204-1462; that stretch reads PIFSRAFKEA…GPSAVLSPHV (259 aa). Residues 1549–1688 form an N-terminal hotdog fold region; that stretch reads HGVLYRTTSI…GTLKLISLPP (140 aa). The 299-residue stretch at 1549-1847 folds into the PKS/mFAS DH domain; the sequence is HGVLYRTTSI…LRAVQPPVVE (299 aa). The interval 1561-1842 is dehydratase (DH) domain; the sequence is TNDIICAGFV…ISEVMLRAVQ (282 aa). Catalysis depends on His-1581, which acts as the Proton acceptor; for dehydratase activity. The tract at residues 1703-1847 is C-terminal hotdog fold; sequence NSEVDVSKAY…LRAVQPPVVE (145 aa). Residue Asp-1764 is the Proton donor; for dehydratase activity of the active site. The Ketoreductase (KR) domain maps to 2008–2186; that stretch reads GTVLITGGTG…AVSLAWGPWA (179 aa). Residues 2277 to 2354 enclose the Carrier 2 domain; it reads SRSDTLLGLV…ALVQYLLDRI (78 aa). Ser-2313 is subject to O-(pantetheine 4'-phosphoryl)serine. Over residues 2361–2373 the composition is skewed to acidic residues; it reads EIELDQDVAEEET. Residues 2361 to 2412 are disordered; the sequence is EIELDQDVAEEETVSGTNGHQNGHQNGTQNGHSNGHANGASTNGDATDGIDP. The segment covering 2375-2396 has biased composition (low complexity); sequence SGTNGHQNGHQNGTQNGHSNGH. The interval 2497 to 2711 is thioester reductase (TE) domain; sequence SLSVYSAVAA…AIAVEIEHWA (215 aa).

In the N-terminal section; belongs to the NRP synthetase family. The cofactor is pantetheine 4'-phosphate.

Functionally, PKS-NRPS hybrid synthetase that, alone, is sufficient to produce naringenin chalcone, the direct precursor of naringenin, by using p-coumaric acid (p-CA) or p-hydroxybenzoic acid (p-HBA) with the involvement of malonyl-CoA molecules. The adenylation (A) domain activates p-CA or p-HBA as adenylates, which are transferred to the thiol group of the pantetheinyl residue of the T domain, and further transferred to the adjacent PKS portion of fnsA. Besides p-CA and p-HBA, the A domain is also able to activate other substrates such as cinnamic acid and salicyclic acid. Within the PKS portion of fnsA, p-CA and p-HBA act as starter units for respectively three or four malonyl-CoA molecules for elongation by the AT and KS domains of fnsA. Afterwards, naringenin chalcone is cyclized through Claisen condensation and thereby released either spontaneously or catalyzed by the TE domain. Finally, naringenin chalcone is converted to naringenin spontaneously or by a chalcone isomerase. The polypeptide is Naringenin synthase (Pestalotiopsis fici (strain W106-1 / CGMCC3.15140)).